A 67-amino-acid polypeptide reads, in one-letter code: ORF2p protein (67 aa).

The segment at 13 to 18 (WIGHPV) is important for viral replication in intestinal cells. At 22 to 38 (AIIYPFVGFIPLSLKEV) the chain is embedded in the membrane.

The protein resides in the host cytoplasmic vesicle membrane. Facilitates virus release from intestinal cells in vitro, possibly through the host autophagic pathway. This chain is ORF2p protein, found in Homo sapiens (Human).